The primary structure comprises 541 residues: Tyrosine-protein phosphatase non-receptor type 5 (541 aa).

Residues 1–55 (MCCSERLLGLPQPVEMEAPDEAEGLPSKQKEMPPPPPPSPPSEPAQKLPPQGAGS) are disordered. The segment covering 32-43 (MPPPPPPSPPSE) has biased composition (pro residues). The next 2 helical transmembrane spans lie at 64-84 (LCLF…LSGH) and 122-142 (LLLV…WHLL). A Phosphoserine; by PKA modification is found at Ser-221. Position 231 is a phosphothreonine; by MAPK (Thr-231). Phosphoserine; by MAPK is present on Ser-244. One can recognise a Tyrosine-protein phosphatase domain in the interval 276–531 (LQAEFFEIPM…QFVHHAMSLY (256 aa)). Residues Asp-437, 472 to 478 (CSAGIGR), and Gln-516 contribute to the substrate site. Cys-472 acts as the Phosphocysteine intermediate in catalysis.

This sequence belongs to the protein-tyrosine phosphatase family. Non-receptor class subfamily. Post-translationally, phosphorylation at Ser-221 by PKA deactivates PTPN5. Phosphorylation at Thr-231 and Ser-244 by MAPKs stabilizes the phosphatase, dephosphorylation of these sites results in ubiquitin-mediated degradation of the active phosphatase. STEP20 is expressed only in the CNS.

Its subcellular location is the endoplasmic reticulum membrane. The protein resides in the cytoplasm. The catalysed reaction is O-phospho-L-tyrosyl-[protein] + H2O = L-tyrosyl-[protein] + phosphate. May regulate the activity of several effector molecules involved in synaptic plasticity and neuronal cell survival, including MAPKs, Src family kinases and NMDA receptors. In Mus musculus (Mouse), this protein is Tyrosine-protein phosphatase non-receptor type 5 (Ptpn5).